We begin with the raw amino-acid sequence, 72 residues long: MKNSESLKEFKKLNSDQITEKIDQLRKDLFDLRFKQATRQLNETHKFKIIKKQVAQLLTLSKSQSASQTTSD.

This sequence belongs to the universal ribosomal protein uL29 family.

The protein is Large ribosomal subunit protein uL29 of Prochlorococcus marinus (strain MIT 9215).